The sequence spans 147 residues: Large ribosomal subunit protein uL15 (147 aa).

Residues 1–42 (MTIKVHHLRPAPGAKTAKTRVGRGEGSKGKTAGRGTKGSKAR) form a disordered region.

This sequence belongs to the universal ribosomal protein uL15 family. Part of the 50S ribosomal subunit.

In terms of biological role, binds to the 23S rRNA. The polypeptide is Large ribosomal subunit protein uL15 (Salinispora arenicola (strain CNS-205)).